The sequence spans 332 residues: Methionine synthase (332 aa).

Positions 211, 213, and 296 each coordinate Zn(2+).

It belongs to the archaeal MetE family. Zn(2+) is required as a cofactor.

Its pathway is amino-acid biosynthesis; L-methionine biosynthesis via de novo pathway. In terms of biological role, catalyzes the transfer of a methyl group to L-homocysteine resulting in methionine formation. The physiological methyl donor is unknown. The polypeptide is Methionine synthase (Saccharolobus solfataricus (strain ATCC 35092 / DSM 1617 / JCM 11322 / P2) (Sulfolobus solfataricus)).